We begin with the raw amino-acid sequence, 954 residues long: Mitogen-activated protein kinase kinase kinase 10 (954 aa).

One can recognise an SH3 domain in the interval 16-81 (PAGPVWTAVF…PSNYVAPGAP (66 aa)). Positions 98–360 (LQLEEIIGVG…GSILKRLEVI (263 aa)) constitute a Protein kinase domain. ATP contacts are provided by residues 104–112 (IGVGGFGKV) and lysine 125. Catalysis depends on aspartate 222, which acts as the Proton acceptor. Position 258 is a phosphothreonine; by autocatalysis (threonine 258). The residue at position 262 (serine 262) is a Phosphoserine; by autocatalysis and MAP4K1. Leucine-zipper stretches follow at residues 384–405 (IQHM…EEEL) and 419–440 (LRRR…ELHL). Disordered regions lie at residues 490–665 (PTLD…RWGH), 716–739 (RFPR…PGLG), and 757–954 (STRS…HGSH). A phosphoserine mark is found at serine 498, serine 502, and serine 506. The segment covering 501–511 (ASPPASPSIIP) has biased composition (low complexity). The residue at position 558 (threonine 558) is a Phosphothreonine. Over residues 566–578 (QKERVGGEERLKG) the composition is skewed to basic and acidic residues. Over residues 611–620 (EMEEFAEAED) the composition is skewed to acidic residues. Over residues 631–640 (STPSYLSVPL) the composition is skewed to low complexity. The span at 773–790 (APSPPPSPPAPTPTPSPS) shows a compositional bias: pro residues. Arginine 857 carries the post-translational modification Omega-N-methylarginine. The segment covering 913-927 (PSRPDTPESPGPPSV) has biased composition (pro residues).

This sequence belongs to the protein kinase superfamily. STE Ser/Thr protein kinase family. MAP kinase kinase kinase subfamily. As to quaternary structure, homodimer. Interacts with SH3RF2. Mg(2+) is required as a cofactor. Autophosphorylation on serine and threonine residues within the activation loop plays a role in enzyme activation. In terms of tissue distribution, expressed in brain and skeletal muscle.

The catalysed reaction is L-seryl-[protein] + ATP = O-phospho-L-seryl-[protein] + ADP + H(+). The enzyme catalyses L-threonyl-[protein] + ATP = O-phospho-L-threonyl-[protein] + ADP + H(+). Its activity is regulated as follows. Homodimerization via the leucine zipper domains is required for autophosphorylation and subsequent activation. Functionally, activates the JUN N-terminal pathway. This is Mitogen-activated protein kinase kinase kinase 10 (MAP3K10) from Homo sapiens (Human).